The primary structure comprises 171 residues: Large ribosomal subunit protein uL10 (171 aa).

The protein belongs to the universal ribosomal protein uL10 family. In terms of assembly, part of the ribosomal stalk of the 50S ribosomal subunit. The N-terminus interacts with L11 and the large rRNA to form the base of the stalk. The C-terminus forms an elongated spine to which L12 dimers bind in a sequential fashion forming a multimeric L10(L12)X complex.

Functionally, forms part of the ribosomal stalk, playing a central role in the interaction of the ribosome with GTP-bound translation factors. The polypeptide is Large ribosomal subunit protein uL10 (Methylocella silvestris (strain DSM 15510 / CIP 108128 / LMG 27833 / NCIMB 13906 / BL2)).